The chain runs to 487 residues: Structure-specific endonuclease subunit SLX1 (487 aa).

One can recognise a GIY-YIG domain in the interval 27–109 (PFYACYLLRS…QKPELSRHLR (83 aa)). The segment at 44-69 (RTYVGSTPDPPRRIRQHNGELKQGAW) is disordered. The SLX1-type zinc finger occupies 262–328 (CHLCQERIAF…LPYQGLCPNC (67 aa)). Positions 359–396 (KAEKAEKAEKAEKAEKAEKAEKAGRKVRQREMKTKKGD) are enriched in basic and acidic residues. 2 disordered regions span residues 359 to 407 (KAEK…QPES) and 433 to 475 (PARS…SEPE). The segment covering 397–407 (QSNGTVAQPES) has biased composition (polar residues). Basic and acidic residues predominate over residues 438-455 (KSKDVGGEGIRHSTHTDD). Positions 465-475 (ETEDESESEPE) are enriched in acidic residues.

It belongs to the SLX1 family. Forms a heterodimer with SLX4. The cofactor is a divalent metal cation.

The protein localises to the nucleus. Its function is as follows. Catalytic subunit of the SLX1-SLX4 structure-specific endonuclease that resolves DNA secondary structures generated during DNA repair and recombination. Has endonuclease activity towards branched DNA substrates, introducing single-strand cuts in duplex DNA close to junctions with ss-DNA. The protein is Structure-specific endonuclease subunit SLX1 of Cryptococcus neoformans var. neoformans serotype D (strain B-3501A) (Filobasidiella neoformans).